A 276-amino-acid polypeptide reads, in one-letter code: MIERWTTAVLDTDLPGGWAVARGPDGFLYDDNGALFPRHWLKGQDLPLLAEHGIGHLDGEPVYLLELSARAEVPGCGWKGLRAFMLEGDHTLYKVLGYAAQIGTWAREHRYCGSCGRPMAQVPGERAMYCQPCDLRSYPRISPSMIVLITRGDEILLARSPRFVTGVYSTLAGFAEPGESAEDCLIREVREEVSIEVRNIQYVGSQCWPFPHSMMLGFHAEYAGGEIIPQEDEIEDAQWFSVHALPPLPASRSIARYLIDLYVARRLGHAEPVLPG.

Arg82 lines the substrate pocket. Positions 112 and 115 each coordinate Zn(2+). Residue Glu125 coordinates substrate. Zn(2+) contacts are provided by Cys130 and Cys133. Tyr138 is a binding site for substrate. A Nudix hydrolase domain is found at 139–262 (PRISPSMIVL…SIARYLIDLY (124 aa)). Residues Ala172, Glu188, and Glu192 each contribute to the a divalent metal cation site. A Nudix box motif is present at residues 173–194 (GFAEPGESAEDCLIREVREEVS). 206–213 (QCWPFPHS) is a binding site for substrate. An a divalent metal cation-binding site is contributed by Glu233. Residue Ala255 participates in substrate binding.

This sequence belongs to the Nudix hydrolase family. NudC subfamily. Homodimer. Mg(2+) is required as a cofactor. Mn(2+) serves as cofactor. It depends on Zn(2+) as a cofactor.

The catalysed reaction is a 5'-end NAD(+)-phospho-ribonucleoside in mRNA + H2O = a 5'-end phospho-adenosine-phospho-ribonucleoside in mRNA + beta-nicotinamide D-ribonucleotide + 2 H(+). It catalyses the reaction NAD(+) + H2O = beta-nicotinamide D-ribonucleotide + AMP + 2 H(+). The enzyme catalyses NADH + H2O = reduced beta-nicotinamide D-ribonucleotide + AMP + 2 H(+). MRNA decapping enzyme that specifically removes the nicotinamide adenine dinucleotide (NAD) cap from a subset of mRNAs by hydrolyzing the diphosphate linkage to produce nicotinamide mononucleotide (NMN) and 5' monophosphate mRNA. The NAD-cap is present at the 5'-end of some mRNAs and stabilizes RNA against 5'-processing. Has preference for mRNAs with a 5'-end purine. Catalyzes the hydrolysis of a broad range of dinucleotide pyrophosphates. The sequence is that of NAD-capped RNA hydrolase NudC from Pseudomonas fluorescens (strain ATCC BAA-477 / NRRL B-23932 / Pf-5).